A 1158-amino-acid polypeptide reads, in one-letter code: ATP-dependent helicase/deoxyribonuclease subunit B (1158 aa).

Residues 1–275 (MTLHAYLGRA…QYFNQLYRFN (275 aa)) form the UvrD-like helicase ATP-binding domain. Residue 8-15 (GRAGTGKS) coordinates ATP. A UvrD-like helicase C-terminal domain is found at 269–583 (NQLYRFNNQD…SIGTMDLAKV (315 aa)). [4Fe-4S] cluster is bound by residues Cys784, Cys1112, Cys1115, and Cys1121.

The protein belongs to the helicase family. AddB/RexB type 1 subfamily. In terms of assembly, heterodimer of AddA and AddB. Requires Mg(2+) as cofactor. [4Fe-4S] cluster is required as a cofactor.

The heterodimer acts as both an ATP-dependent DNA helicase and an ATP-dependent, dual-direction single-stranded exonuclease. Recognizes the chi site generating a DNA molecule suitable for the initiation of homologous recombination. The AddB subunit has 5' -&gt; 3' nuclease activity but not helicase activity. The chain is ATP-dependent helicase/deoxyribonuclease subunit B from Staphylococcus aureus (strain COL).